Here is a 420-residue protein sequence, read N- to C-terminus: Glucose-1-phosphate adenylyltransferase (420 aa).

Alpha-D-glucose 1-phosphate-binding positions include tyrosine 107, glycine 172, 187 to 188, and serine 205; that span reads EK.

The protein belongs to the bacterial/plant glucose-1-phosphate adenylyltransferase family. Homotetramer.

It catalyses the reaction alpha-D-glucose 1-phosphate + ATP + H(+) = ADP-alpha-D-glucose + diphosphate. Its pathway is glycan biosynthesis; glycogen biosynthesis. In terms of biological role, involved in the biosynthesis of ADP-glucose, a building block required for the elongation reactions to produce glycogen. Catalyzes the reaction between ATP and alpha-D-glucose 1-phosphate (G1P) to produce pyrophosphate and ADP-Glc. This is Glucose-1-phosphate adenylyltransferase from Rhizobium etli (strain ATCC 51251 / DSM 11541 / JCM 21823 / NBRC 15573 / CFN 42).